The following is a 589-amino-acid chain: ATP-dependent lipid A-core flippase (589 aa).

Transmembrane regions (helical) follow at residues L29–L49, W70–D90, V157–V177, M261–G281, and L283–K303. In terms of domain architecture, ABC transmembrane type-1 spans V32–R314. The ABC transporter domain maps to I346–M582. Residue G380–S387 coordinates ATP.

Belongs to the ABC transporter superfamily. Lipid exporter (TC 3.A.1.106) family. As to quaternary structure, homodimer.

It localises to the cell inner membrane. The catalysed reaction is ATP + H2O + lipid A-core oligosaccharideSide 1 = ADP + phosphate + lipid A-core oligosaccharideSide 2.. Functionally, involved in lipopolysaccharide (LPS) biosynthesis. Translocates lipid A-core from the inner to the outer leaflet of the inner membrane. Transmembrane domains (TMD) form a pore in the inner membrane and the ATP-binding domain (NBD) is responsible for energy generation. The sequence is that of ATP-dependent lipid A-core flippase from Xanthomonas campestris pv. campestris (strain 8004).